Reading from the N-terminus, the 330-residue chain is MKTILNKLINHEVLSKEEAKNVLINISSGQYNPSQISAFLTVFMMRSITIDELSGFREALLELCIRIDLSAYNTIDLCGTGGDGKDTFNISTLASFVAAGAGIKVAKHGNYGVSSISGSSNVMEKMGIKFSNDPSFLEKCIDQAGICVLHAPLFHPAMKNVGPIRKELAVKTFFNMLGPMVNPSFPQNQLVGVFNLELARMYAYLYQNTNVNFTILHSLDGYDEISLTGPTKIITSHMEGMIKPEDFGIRLLSQTEIEGGKTIEESAEIFTNIISGKGNEAQNNVVCANAAMAIATVTKCSPQEGFELAKESLFSGKGLKALQKLQELSL.

Residues Gly-79, 82-83 (GD), Thr-87, 89-92 (NIST), 107-115 (KHGNYGVSS), and Ser-119 each bind 5-phospho-alpha-D-ribose 1-diphosphate. Position 79 (Gly-79) interacts with anthranilate. Position 91 (Ser-91) interacts with Mg(2+). Asn-110 is a binding site for anthranilate. Arg-165 contacts anthranilate. Residues Asp-223 and Glu-224 each contribute to the Mg(2+) site.

The protein belongs to the anthranilate phosphoribosyltransferase family. As to quaternary structure, homodimer. It depends on Mg(2+) as a cofactor.

It catalyses the reaction N-(5-phospho-beta-D-ribosyl)anthranilate + diphosphate = 5-phospho-alpha-D-ribose 1-diphosphate + anthranilate. The protein operates within amino-acid biosynthesis; L-tryptophan biosynthesis; L-tryptophan from chorismate: step 2/5. Catalyzes the transfer of the phosphoribosyl group of 5-phosphorylribose-1-pyrophosphate (PRPP) to anthranilate to yield N-(5'-phosphoribosyl)-anthranilate (PRA). In Flavobacterium johnsoniae (strain ATCC 17061 / DSM 2064 / JCM 8514 / BCRC 14874 / CCUG 350202 / NBRC 14942 / NCIMB 11054 / UW101) (Cytophaga johnsonae), this protein is Anthranilate phosphoribosyltransferase.